A 399-amino-acid polypeptide reads, in one-letter code: Phosphoglycerate kinase (399 aa).

Substrate contacts are provided by residues 22-24, Arg-38, 61-64, Arg-119, and Arg-152; these read DFN and HLGR. Residues Lys-205, Gly-296, Glu-327, and 353-356 each bind ATP; that span reads GGDT.

The protein belongs to the phosphoglycerate kinase family. As to quaternary structure, monomer.

It localises to the cytoplasm. The enzyme catalyses (2R)-3-phosphoglycerate + ATP = (2R)-3-phospho-glyceroyl phosphate + ADP. It participates in carbohydrate degradation; glycolysis; pyruvate from D-glyceraldehyde 3-phosphate: step 2/5. The polypeptide is Phosphoglycerate kinase (Nitratiruptor sp. (strain SB155-2)).